The primary structure comprises 349 residues: tRNA pseudouridine synthase D (349 aa).

F27 provides a ligand contact to substrate. D80 (nucleophile) is an active-site residue. N129 provides a ligand contact to substrate. A TRUD domain is found at G155–L303. F329 is a substrate binding site.

Belongs to the pseudouridine synthase TruD family.

The enzyme catalyses uridine(13) in tRNA = pseudouridine(13) in tRNA. Functionally, responsible for synthesis of pseudouridine from uracil-13 in transfer RNAs. The chain is tRNA pseudouridine synthase D from Salmonella typhi.